The primary structure comprises 255 residues: 4-hydroxy-tetrahydrodipicolinate reductase (255 aa).

Residues 9-14 (GFKGKM), Asp-35, 89-91 (GTT), and 115-118 (APNF) each bind NAD(+). His-145 acts as the Proton donor/acceptor in catalysis. Residue His-146 participates in (S)-2,3,4,5-tetrahydrodipicolinate binding. The active-site Proton donor is the Lys-149. Position 155–156 (155–156 (GT)) interacts with (S)-2,3,4,5-tetrahydrodipicolinate.

The protein belongs to the DapB family.

It is found in the cytoplasm. It catalyses the reaction (S)-2,3,4,5-tetrahydrodipicolinate + NAD(+) + H2O = (2S,4S)-4-hydroxy-2,3,4,5-tetrahydrodipicolinate + NADH + H(+). It carries out the reaction (S)-2,3,4,5-tetrahydrodipicolinate + NADP(+) + H2O = (2S,4S)-4-hydroxy-2,3,4,5-tetrahydrodipicolinate + NADPH + H(+). Its pathway is amino-acid biosynthesis; L-lysine biosynthesis via DAP pathway; (S)-tetrahydrodipicolinate from L-aspartate: step 4/4. Catalyzes the conversion of 4-hydroxy-tetrahydrodipicolinate (HTPA) to tetrahydrodipicolinate. This Streptococcus pneumoniae serotype 19F (strain G54) protein is 4-hydroxy-tetrahydrodipicolinate reductase.